Here is a 600-residue protein sequence, read N- to C-terminus: Aspartate--tRNA(Asp/Asn) ligase (600 aa).

Glu-176 contributes to the L-aspartate binding site. Positions 200–203 are aspartate; sequence QQFK. Residues Arg-222 and His-452 each contribute to the L-aspartate site. Residue 222 to 224 coordinates ATP; the sequence is RDE. Glu-490 contributes to the ATP binding site. Arg-497 contributes to the L-aspartate binding site. 542-545 contributes to the ATP binding site; the sequence is GIDR.

Belongs to the class-II aminoacyl-tRNA synthetase family. Type 1 subfamily. In terms of assembly, homodimer.

It localises to the cytoplasm. It catalyses the reaction tRNA(Asx) + L-aspartate + ATP = L-aspartyl-tRNA(Asx) + AMP + diphosphate. Aspartyl-tRNA synthetase with relaxed tRNA specificity since it is able to aspartylate not only its cognate tRNA(Asp) but also tRNA(Asn). Reaction proceeds in two steps: L-aspartate is first activated by ATP to form Asp-AMP and then transferred to the acceptor end of tRNA(Asp/Asn). The chain is Aspartate--tRNA(Asp/Asn) ligase from Rickettsia felis (strain ATCC VR-1525 / URRWXCal2) (Rickettsia azadi).